Consider the following 518-residue polypeptide: Bifunctional methyltransferase (518 aa).

The tract at residues 1 to 300 is hemK; it reads MQYSIKQILS…SHNRVIEISP (300 aa). Residues 1–302 are RF MTase; it reads MQYSIKQILS…NRVIEISPIN (302 aa). Residues 140-144, Asp-163, Trp-192, Asn-207, Glu-347, Glu-372, Asn-399, and Asp-421 each bind S-adenosyl-L-methionine; that span reads GTGSG. Residue 207-210 coordinates substrate; it reads NPPY. Residues 301–518 are tRNA (guanine-N(7)-)-methyltransferase; sequence INLNRSYARR…MILQHALTDH (218 aa). The interval 305 to 518 is tRNA MTase; it reads RSYARRIGKS…MILQHALTDH (214 aa). Residue Asp-421 is part of the active site. Residues Lys-425 and Asp-457 each contribute to the substrate site.

This sequence in the C-terminal section; belongs to the class I-like SAM-binding methyltransferase superfamily. TrmB family. In the N-terminal section; belongs to the protein N5-glutamine methyltransferase family. PrmC subfamily.

It catalyses the reaction L-glutaminyl-[peptide chain release factor] + S-adenosyl-L-methionine = N(5)-methyl-L-glutaminyl-[peptide chain release factor] + S-adenosyl-L-homocysteine + H(+). The catalysed reaction is guanosine(46) in tRNA + S-adenosyl-L-methionine = N(7)-methylguanosine(46) in tRNA + S-adenosyl-L-homocysteine. In terms of biological role, methylates the class 1 translation termination release factors RF1/PrfA and RF2/PrfB on the glutamine residue of the universally conserved GGQ motif. Its function is as follows. Catalyzes the formation of N(7)-methylguanine at position 46 (m7G46) in tRNA. The polypeptide is Bifunctional methyltransferase (prmC/trmB) (Rickettsia prowazekii (strain Madrid E)).